The sequence spans 285 residues: Seipin (285 aa).

The Cytoplasmic segment spans residues 1-16 (MKINVSRPLQFLQWSS). The helical transmembrane segment at 17-37 (YIVVAFLIQLLIILPLSILIY) threads the bilayer. At 38 to 244 (HDFYLRLLPA…GLRNLMLRKR (207 aa)) the chain is on the lumenal side. The chain crosses the membrane as a helical span at residues 245–265 (FLSYIIGISIFHCIICVLFFI). The Cytoplasmic segment spans residues 266–285 (TGCTAFIFVRKGQEKSKKHS).

It belongs to the seipin family.

The protein localises to the endoplasmic reticulum membrane. Involved in lipid metabolism and lipid droplet (LD) morphology, number, and size. Facilitates initiation of LD formation, and ensures that vectorial budding of LDs from the ER is directed towards the cytoplasm. This Saccharomyces cerevisiae (strain ATCC 204508 / S288c) (Baker's yeast) protein is Seipin.